The primary structure comprises 632 residues: Extracellular metalloproteinase 5 (632 aa).

The signal sequence occupies residues 1 to 20 (MHGLLLAAGLLSLPLHVLAH). Positions 21 to 244 (PQPGTSLAGR…HNVVDYVSHA (224 aa)) are excised as a propeptide. N284 carries N-linked (GlcNAc...) asparagine glycosylation. A Zn(2+)-binding site is contributed by H427. E428 is an active-site residue. H431 provides a ligand contact to Zn(2+). N-linked (GlcNAc...) asparagine glycosylation is found at N591 and N620.

The protein belongs to the peptidase M36 family. Requires Zn(2+) as cofactor.

Its subcellular location is the secreted. Its function is as follows. Secreted metalloproteinase probably acting as a virulence factor. The protein is Extracellular metalloproteinase 5 (MEP5) of Arthroderma otae (strain ATCC MYA-4605 / CBS 113480) (Microsporum canis).